The following is a 56-amino-acid chain: Large ribosomal subunit protein bL32 (56 aa).

The segment at 1–37 (MAVQQNKKSRSRRDMRRSHDALTTAAISVDKASGEKH) is disordered. Residues 7 to 16 (KKSRSRRDMR) are compositionally biased toward basic residues.

Belongs to the bacterial ribosomal protein bL32 family.

This chain is Large ribosomal subunit protein bL32 (rpmF), found in Pasteurella multocida (strain Pm70).